Consider the following 700-residue polypeptide: Polyphosphate kinase (700 aa).

Asn-45 lines the ATP pocket. Residues Arg-373 and Arg-403 each contribute to the Mg(2+) site. The region spanning 428-462 (PGMKIHAKLLLITRREEQGFVRYAHIGTGNFHERT) is the PLD phosphodiesterase 1 domain. His-433 serves as the catalytic Phosphohistidine intermediate. ATP contacts are provided by Tyr-466, Arg-562, and His-590. Residues 585–615 (DRFLEHPRVLVVHNDGDPQVFISSADWMERN) enclose the PLD phosphodiesterase 2 domain.

Belongs to the polyphosphate kinase 1 (PPK1) family. Requires Mg(2+) as cofactor. Post-translationally, an intermediate of this reaction is the autophosphorylated ppk in which a phosphate is covalently linked to a histidine residue through a N-P bond.

The enzyme catalyses [phosphate](n) + ATP = [phosphate](n+1) + ADP. Functionally, catalyzes the reversible transfer of the terminal phosphate of ATP to form a long-chain polyphosphate (polyP). In Vibrio vulnificus (strain CMCP6), this protein is Polyphosphate kinase.